The primary structure comprises 382 residues: Anhydro-N-acetylmuramic acid kinase (382 aa).

Residue 22-29 coordinates ATP; that stretch reads GTSMDGVD.

This sequence belongs to the anhydro-N-acetylmuramic acid kinase family.

It carries out the reaction 1,6-anhydro-N-acetyl-beta-muramate + ATP + H2O = N-acetyl-D-muramate 6-phosphate + ADP + H(+). It participates in amino-sugar metabolism; 1,6-anhydro-N-acetylmuramate degradation. Its pathway is cell wall biogenesis; peptidoglycan recycling. Catalyzes the specific phosphorylation of 1,6-anhydro-N-acetylmuramic acid (anhMurNAc) with the simultaneous cleavage of the 1,6-anhydro ring, generating MurNAc-6-P. Is required for the utilization of anhMurNAc either imported from the medium or derived from its own cell wall murein, and thus plays a role in cell wall recycling. This is Anhydro-N-acetylmuramic acid kinase from Burkholderia cenocepacia (strain ATCC BAA-245 / DSM 16553 / LMG 16656 / NCTC 13227 / J2315 / CF5610) (Burkholderia cepacia (strain J2315)).